A 142-amino-acid chain; its full sequence is Salivary protein 15b (142 aa).

The signal sequence occupies residues 1–20; sequence MKYLGLALISAVFLIGTCQA. Disulfide bonds link Cys-27/Cys-44, Cys-40/Cys-108, and Cys-91/Cys-117.

This sequence belongs to the PBP/GOBP family. As to expression, female salivary gland.

It is found in the secreted. Inhibits contact coagulation pathway activation in the host by sequestering anionic polymers, such as dextran sulfate and heparin, and thus blocking interaction of protein components of the pathway with negatively charged surfaces. Inhibits dextran sulfate-mediated autoactivation of host coagulation factor XII (F12). Inhibits dextran sulfate-mediated activation of host factor XI (F11) by activated F12. Inhibits polyphosphate-induced plasma extravasation at the injection site in mouse model, probably via inhibition of bradykinin generation in host skin. The polypeptide is Salivary protein 15b (Phlebotomus duboscqi (Sandfly)).